Consider the following 1068-residue polypeptide: MPPRPSSGELWGIHLMPPRILVECLLPNGMIVTLECLREATLITIKHELFKEARKYPLHQLLQDESSYIFVSVTQEAEREEFFDETRRLCDLRLFQPFLKVIEPVGNREEKILNREIGFAIGMPVCEFDMVKDPEVQDFRRNILNVCKEAVDLRDLNSPHSRAMYVYPPNVESSPELPKHIYNKLDKGQIIVVIWVIVSPNNDKQKYTLKINHDCVPEQVIAEAIRKKTRSMLLSSEQLKLCVLEYQGKYILKVCGCDEYFLEKYPLSQYKYIRSCIMLGRMPNLMLMAKESLYSQLPMDCFTMPSYSRRISTATPYMNGETSTKSLWVINSALRIKILCATYVNVNIRDIDKIYVRTGIYHGGEPLCDNVNTQRVPCSNPRWNEWLNYDIYIPDLPRAARLCLSICSVKGRKGAKEEHCPLAWGNINLFDYTDTLVSGKMALNLWPVPHGLEDLLNPIGVTGSNPNKETPCLELEFDWFSSVVKFPDMSVIEEHANWSVSREAGFSYSHAGLSNRLARDNELRENDKEQLRAICTRDPLSEITEQEKDFLWSHRHYCVTIPEILPKLLLSVKWNSRDEVAQMYCLVKDWPPIKPEQAMELLDCNYPDPMVRGFAVRCLEKYLTDDKLSQYLIQLVQVLKYEQYLDNLLVRFLLKKALTNQRIGHFFFWHLKSEMHNKTVSQRFGLLLESYCRACGMYLKHLNRQVEAMEKLINLTDILKQEKKDETQKVQMKFLVEQMRRPDFMDALQGFLSPLNPAHQLGNLRLEECRIMSSAKRPLWLNWENPDIMSELLFQNNEIIFKNGDDLRQDMLTLQIIRIMENIWQNQGLDLRMLPYGCLSIGDCVGLIEVVRNSHTIMQIQCKGGLKGALQFNSHTLHQWLKDKNKGEIYDAAIDLFTRSCAGYCVATFILGIGDRHNSNIMVKDDGQLFHIDFGHFLDHKKKKFGYKRERVPFVLTQDFLIVISKGAQECTKTREFERFQEMCYKAYLAIRQHANLFINLFSMMLGSGMPELQSFDDIAYIRKTLALDKTEQEALEYFMKQMNDAHHGGWTTKMDWIFHTIKQHALN.

The PI3K-ABD domain maps to methionine 16–valine 105. Positions lysine 187 to alanine 289 constitute a PI3K-RBD domain. The 158-residue stretch at isoleucine 330–proline 487 folds into the C2 PI3K-type domain. The 178-residue stretch at leucine 517–alanine 694 folds into the PIK helical domain. A PI3K/PI4K catalytic domain is found at arginine 765–tryptophan 1051. Positions isoleucine 771 to arginine 777 are G-loop. Positions glycine 912–asparagine 920 are catalytic loop. The segment at histidine 931 to threonine 957 is activation loop.

Belongs to the PI3/PI4-kinase family. In terms of assembly, heterodimer of a catalytic subunit PIK3CA and a p85 regulatory subunit (PIK3R1, PIK3R2 or PIK3R3). Interacts with IRS1 in nuclear extracts. Interacts with RUFY3. Interacts with RASD2. Interacts with APPL1. Interacts with HRAS and KRAS. Interaction with HRAS/KRAS is required for PI3K pathway signaling and cell proliferation stimulated by EGF and FGF2. Interacts with FAM83B; activates the PI3K/AKT signaling cascade.

It catalyses the reaction L-seryl-[protein] + ATP = O-phospho-L-seryl-[protein] + ADP + H(+). The enzyme catalyses a 1,2-diacyl-sn-glycero-3-phospho-(1D-myo-inositol) + ATP = a 1,2-diacyl-sn-glycero-3-phospho-(1D-myo-inositol-3-phosphate) + ADP + H(+). The catalysed reaction is a 1,2-diacyl-sn-glycero-3-phospho-(1D-myo-inositol-4,5-bisphosphate) + ATP = a 1,2-diacyl-sn-glycero-3-phospho-(1D-myo-inositol-3,4,5-trisphosphate) + ADP + H(+). It carries out the reaction 1,2-dioctanoyl-sn-glycero-3-phospho-(1D-myo-inositol-4,5-bisphosphate) + ATP = 1,2-dioctanoyl-sn-glycero-3-phospho-(1D-myo-inositol-3,4,5-trisphosphate) + ADP + H(+). It catalyses the reaction 1-octadecanoyl-2-(5Z,8Z,11Z,14Z)-eicosatetraenoyl-sn-glycero-3-phospho-1D-myo-inositol 4,5-bisphosphate + ATP = 1-octadecanoyl-2-(5Z,8Z,11Z,14Z-eicosatetraenoyl)-sn-glycero-3-phospho-(1D-myo-inositol 3,4,5-triphosphate) + ADP + H(+). It participates in phospholipid metabolism; phosphatidylinositol phosphate biosynthesis. Its function is as follows. Phosphoinositide-3-kinase (PI3K) phosphorylates phosphatidylinositol (PI) and its phosphorylated derivatives at position 3 of the inositol ring to produce 3-phosphoinositides. Uses ATP and PtdIns(4,5)P2 (phosphatidylinositol 4,5-bisphosphate) to generate phosphatidylinositol 3,4,5-trisphosphate (PIP3). PIP3 plays a key role by recruiting PH domain-containing proteins to the membrane, including AKT1 and PDPK1, activating signaling cascades involved in cell growth, survival, proliferation, motility and morphology. Participates in cellular signaling in response to various growth factors. Involved in the activation of AKT1 upon stimulation by receptor tyrosine kinases ligands such as EGF, insulin, IGF1, VEGFA and PDGF. Involved in signaling via insulin-receptor substrate (IRS) proteins. Essential in endothelial cell migration during vascular development through VEGFA signaling, possibly by regulating RhoA activity. Required for lymphatic vasculature development, possibly by binding to RAS and by activation by EGF and FGF2, but not by PDGF. Regulates invadopodia formation through the PDPK1-AKT1 pathway. Participates in cardiomyogenesis in embryonic stem cells through a AKT1 pathway. Participates in vasculogenesis in embryonic stem cells through PDK1 and protein kinase C pathway. In addition to its lipid kinase activity, it displays a serine-protein kinase activity that results in the autophosphorylation of the p85alpha regulatory subunit as well as phosphorylation of other proteins such as 4EBP1, H-Ras, the IL-3 beta c receptor and possibly others. Plays a role in the positive regulation of phagocytosis and pinocytosis. This chain is Phosphatidylinositol 4,5-bisphosphate 3-kinase catalytic subunit alpha isoform (PIK3CA), found in Bos taurus (Bovine).